A 313-amino-acid chain; its full sequence is Secreted mono- and diacylglycerol lipase MDL5 (313 aa).

Residues 1-20 (MQLQYVLTLLWIIFAQNVFS) form the signal peptide. A disulfide bridge links Cys-66 with Cys-306. Residues Asn-72 and Asn-111 are each glycosylated (N-linked (GlcNAc...) asparagine). Ser-180 functions as the Nucleophile in the catalytic mechanism. Asp-238 is a catalytic residue. Asn-263 carries an N-linked (GlcNAc...) asparagine glycan. The active site involves His-290.

It belongs to the AB hydrolase superfamily. Lipase family. Class 3 subfamily.

It localises to the secreted. Its subcellular location is the cell wall. The enzyme catalyses a monoacylglycerol + H2O = glycerol + a fatty acid + H(+). The catalysed reaction is a diacylglycerol + H2O = a monoacylglycerol + a fatty acid + H(+). Its function is as follows. Secreted lipase involved in Dandruff and seborrheic dermatitis (D/SD) probably via lipase-mediated breakdown of sebaceous lipids and release of irritating free fatty acids. Shows activity against monoglyceride and diglyceride substrates, but not triglyceride substrates and does not exhibit regio-selective production of diacylglycerols. Cleaves oleic acid from 1,2 isomers of diolein on both the 1 and the 2 position of the glycerol backbone, resulting mainly in free fatty acids but no monoolein is detected. Shows activity on monoolein and liberates mostly free fatty acids, but can also perform the reverse reaction and produce diolein. This Malassezia globosa (strain ATCC MYA-4612 / CBS 7966) (Dandruff-associated fungus) protein is Secreted mono- and diacylglycerol lipase MDL5.